Consider the following 582-residue polypeptide: MSIDFRSLNTVWSSILVETLHHLGLTTAIISPGYRSTPLTFAFATHPKIETIPILDERSAAFFALGIAKKNYQPIVIVCTSGTAAANFYPAIIEAKESRIPLLVLTADRPPELRNCHAGQTIDQVKLYGNYPNWQIELTLPSVELKRLEYLRQTVIHGWEKTMFPTPGPVHFNIPFRDPLAPINQPEAIALESKFSQNFFASLRPIIRTELIPNSDLIELLKNQFKSHSGIIIAGLAQPEKPEVYCQAIAKISQTLNFPVLAEGLSPLRNYSQLNPYLISTYDLILRNQKLANKLIPKIVLQIGELPTSKQLRTWLEAANSHRLIIDQSDHNFDPLHGKTTHLRISVEQLAKILITQYFNNNHDINYLNLWCQAEEKVRENIDTKMAKINHILEPKISWLISQTLPKNTSIFVANSMPVRDVEFFWVPNNSQIQPFFNRGVNGIDGTLSTALGIAHRYQKTVMLTGDLALLHDTNGFLLRNKLVGHLTIILINNQGGGIFEMLPIANFEPPFTEFFATPQEIDFADLCKTYGLEHQKISSWNQLQQLLNPLPSSGIRILELQTDRQLDARWRLDNLDTFIDL.

The protein belongs to the TPP enzyme family. MenD subfamily. As to quaternary structure, homodimer. It depends on Mg(2+) as a cofactor. The cofactor is Mn(2+). Requires thiamine diphosphate as cofactor.

The enzyme catalyses isochorismate + 2-oxoglutarate + H(+) = 5-enolpyruvoyl-6-hydroxy-2-succinyl-cyclohex-3-ene-1-carboxylate + CO2. The protein operates within quinol/quinone metabolism; 1,4-dihydroxy-2-naphthoate biosynthesis; 1,4-dihydroxy-2-naphthoate from chorismate: step 2/7. It participates in cofactor biosynthesis; phylloquinone biosynthesis. Functionally, catalyzes the thiamine diphosphate-dependent decarboxylation of 2-oxoglutarate and the subsequent addition of the resulting succinic semialdehyde-thiamine pyrophosphate anion to isochorismate to yield 2-succinyl-5-enolpyruvyl-6-hydroxy-3-cyclohexene-1-carboxylate (SEPHCHC). The sequence is that of 2-succinyl-5-enolpyruvyl-6-hydroxy-3-cyclohexene-1-carboxylate synthase from Trichodesmium erythraeum (strain IMS101).